Reading from the N-terminus, the 693-residue chain is DNA ligase (693 aa).

NAD(+) is bound by residues 43–47 (DEEYD), 92–93 (SL), and Glu-123. Lys-125 (N6-AMP-lysine intermediate) is an active-site residue. Residues Arg-146, Glu-180, Lys-296, and Lys-320 each coordinate NAD(+). Residues Cys-414, Cys-417, Cys-433, and Cys-438 each coordinate Zn(2+). Residues 595-684 (VKYDVLKGLT…AKLKGYNFDE (90 aa)) enclose the BRCT domain.

It belongs to the NAD-dependent DNA ligase family. LigA subfamily. Mg(2+) serves as cofactor. It depends on Mn(2+) as a cofactor.

It carries out the reaction NAD(+) + (deoxyribonucleotide)n-3'-hydroxyl + 5'-phospho-(deoxyribonucleotide)m = (deoxyribonucleotide)n+m + AMP + beta-nicotinamide D-nucleotide.. Its function is as follows. DNA ligase that catalyzes the formation of phosphodiester linkages between 5'-phosphoryl and 3'-hydroxyl groups in double-stranded DNA using NAD as a coenzyme and as the energy source for the reaction. It is essential for DNA replication and repair of damaged DNA. This chain is DNA ligase, found in Thermotoga neapolitana (strain ATCC 49049 / DSM 4359 / NBRC 107923 / NS-E).